The chain runs to 184 residues: ATP synthase subunit b, chloroplastic (184 aa).

A helical transmembrane segment spans residues 31-49 (IINPSVVLSVLIYFGKGVL).

Belongs to the ATPase B chain family. As to quaternary structure, F-type ATPases have 2 components, F(1) - the catalytic core - and F(0) - the membrane proton channel. F(1) has five subunits: alpha(3), beta(3), gamma(1), delta(1), epsilon(1). F(0) has four main subunits: a(1), b(1), b'(1) and c(10-14). The alpha and beta chains form an alternating ring which encloses part of the gamma chain. F(1) is attached to F(0) by a central stalk formed by the gamma and epsilon chains, while a peripheral stalk is formed by the delta, b and b' chains.

It localises to the plastid. Its subcellular location is the chloroplast thylakoid membrane. In terms of biological role, f(1)F(0) ATP synthase produces ATP from ADP in the presence of a proton or sodium gradient. F-type ATPases consist of two structural domains, F(1) containing the extramembraneous catalytic core and F(0) containing the membrane proton channel, linked together by a central stalk and a peripheral stalk. During catalysis, ATP synthesis in the catalytic domain of F(1) is coupled via a rotary mechanism of the central stalk subunits to proton translocation. Component of the F(0) channel, it forms part of the peripheral stalk, linking F(1) to F(0). This Pinus koraiensis (Korean pine) protein is ATP synthase subunit b, chloroplastic.